We begin with the raw amino-acid sequence, 125 residues long: SKP1-like protein 7 (125 aa).

An interaction with the F-box domain of F-box proteins region spans residues 94–125; the sequence is MNAAYDLHIKSLLALAYQTVADMVNDNKWAFE.

Belongs to the SKP1 family. As to quaternary structure, part of a SCF (SKP1-cullin-F-box) protein ligase complex. In terms of tissue distribution, restricted to siliques.

The protein localises to the nucleus. Its pathway is protein modification; protein ubiquitination. Involved in ubiquitination and subsequent proteasomal degradation of target proteins. Together with CUL1, RBX1 and a F-box protein, it forms a SCF E3 ubiquitin ligase complex. The functional specificity of this complex depends on the type of F-box protein. In the SCF complex, it serves as an adapter that links the F-box protein to CUL1. In Arabidopsis thaliana (Mouse-ear cress), this protein is SKP1-like protein 7 (ASK7).